A 94-amino-acid chain; its full sequence is MRKYEIMYIINPTVLEEGREELVNQVNALLTSNGATIAKTEKWGERKLAYPIDKKKSGFYVLTTFEIDGTKLAEVESKLNIMESVMRYIVVKQD.

This sequence belongs to the bacterial ribosomal protein bS6 family.

In terms of biological role, binds together with bS18 to 16S ribosomal RNA. The chain is Small ribosomal subunit protein bS6 from Fusobacterium nucleatum subsp. nucleatum (strain ATCC 25586 / DSM 15643 / BCRC 10681 / CIP 101130 / JCM 8532 / KCTC 2640 / LMG 13131 / VPI 4355).